The primary structure comprises 278 residues: uncharacterized protein (278 aa).

Positions 1-20 (MSPLIVGTLIIILLSGLATA) are cleaved as a signal peptide. The GPI-anchor amidated glycine moiety is linked to residue Gly-96. Positions 97–278 (TFLTSPTAKR…QLIMQTFNGS (182 aa)) are cleaved as a propeptide — removed in mature form.

The protein localises to the cell membrane. This is an uncharacterized protein from Schizosaccharomyces pombe (strain 972 / ATCC 24843) (Fission yeast).